Here is a 145-residue protein sequence, read N- to C-terminus: Arginine repressor (145 aa).

This sequence belongs to the ArgR family.

It is found in the cytoplasm. Its pathway is amino-acid biosynthesis; L-arginine biosynthesis [regulation]. In terms of biological role, regulates arginine biosynthesis genes. This chain is Arginine repressor, found in Solibacter usitatus (strain Ellin6076).